The sequence spans 182 residues: MNYVPELKKYYKDSVIKELVKEFEYKSIMQVPKLEKIVVSIGVGEAVRNKKLLDSAVLELAQITGQKAVKTKAKKAIAGFKIRQGQEIGAKVTLRGNSMYEFLYKLIHLALPRVKDFRGINGDAFDGNGNYSFGISEQIIFSEIDYDKIERISGLNVTIVTTASNDKESKALLLKFGMPFSN.

It belongs to the universal ribosomal protein uL5 family. Part of the 50S ribosomal subunit; part of the 5S rRNA/L5/L18/L25 subcomplex. Contacts the 5S rRNA and the P site tRNA. Forms a bridge to the 30S subunit in the 70S ribosome.

Its function is as follows. This is one of the proteins that bind and probably mediate the attachment of the 5S RNA into the large ribosomal subunit, where it forms part of the central protuberance. In the 70S ribosome it contacts protein S13 of the 30S subunit (bridge B1b), connecting the 2 subunits; this bridge is implicated in subunit movement. Contacts the P site tRNA; the 5S rRNA and some of its associated proteins might help stabilize positioning of ribosome-bound tRNAs. The sequence is that of Large ribosomal subunit protein uL5 from Borreliella afzelii (strain PKo) (Borrelia afzelii).